The sequence spans 399 residues: Aspartate aminotransferase (399 aa).

2 residues coordinate L-aspartate: Gly-42 and Asn-179. Lys-240 is subject to N6-(pyridoxal phosphate)lysine. Arg-372 contacts L-aspartate.

It belongs to the class-I pyridoxal-phosphate-dependent aminotransferase family. Homodimer. The cofactor is pyridoxal 5'-phosphate.

It localises to the cytoplasm. It catalyses the reaction L-aspartate + 2-oxoglutarate = oxaloacetate + L-glutamate. The polypeptide is Aspartate aminotransferase (aspC) (Sulfurisphaera tokodaii (strain DSM 16993 / JCM 10545 / NBRC 100140 / 7) (Sulfolobus tokodaii)).